Here is a 254-residue protein sequence, read N- to C-terminus: Persulfide dioxygenase ETHE1, mitochondrial (254 aa).

The N-terminal 7 residues, 1 to 7, are a transit peptide targeting the mitochondrion; sequence MASAVVR. Residues Ser14, Ser17, and Ser19 each carry the phosphoserine modification. Lys32 is subject to N6-acetyllysine; alternate. Lys32 is subject to N6-succinyllysine; alternate. Lys66 is modified (N6-acetyllysine). The Fe cation site is built by His79, His135, and Asp154. Lys172 is modified (N6-acetyllysine; alternate). An N6-succinyllysine; alternate modification is found at Lys172.

It belongs to the metallo-beta-lactamase superfamily. Glyoxalase II family. In terms of assembly, homodimer. Monomer. Interacts with TST. May interact with RELA. Requires Fe(2+) as cofactor.

It localises to the cytoplasm. Its subcellular location is the nucleus. It is found in the mitochondrion matrix. It carries out the reaction S-sulfanylglutathione + O2 + H2O = sulfite + glutathione + 2 H(+). First described as a protein that can shuttle between the nucleus and the cytoplasm and suppress p53-induced apoptosis by sequestering the transcription factor RELA/NFKB3 in the cytoplasm and preventing its accumulation in the nucleus. Sulfur dioxygenase that plays an essential role in hydrogen sulfide catabolism in the mitochondrial matrix. Hydrogen sulfide (H(2)S) is first oxidized by SQRDL, giving rise to cysteine persulfide residues. ETHE1 consumes molecular oxygen to catalyze the oxidation of the persulfide, once it has been transferred to a thiophilic acceptor, such as glutathione (R-SSH). Plays an important role in metabolic homeostasis in mitochondria by metabolizing hydrogen sulfide and preventing the accumulation of supraphysiological H(2)S levels that have toxic effects, due to the inhibition of cytochrome c oxidase. This Mus musculus (Mouse) protein is Persulfide dioxygenase ETHE1, mitochondrial (Ethe1).